The following is a 148-amino-acid chain: Meiosis inducing protein mei3 (148 aa).

Positions 1 to 20 are enriched in polar residues; the sequence is MSSQNTSNSRHPASSASALP. The tract at residues 1-96 is disordered; it reads MSSQNTSNSR…AQRIEHENKE (96 aa). Residues 21 to 46 are compositionally biased toward low complexity; the sequence is NRTNTARRSTSPRTSTGSSSTNTNTK. The span at 75 to 86 shows a compositional bias: basic residues; it reads PMKRTKRVRRTP.

Functionally, acts as a critical meiotic inducer by binding non-covalently to protein kinase ran1/pat1 inhibiting its enzymatic activity. Inhibits ran1/pat1 by acting as a pseudosubstrate for ran1/pat1 instead of its natural substrate ste11. Inactivation of the ran1/pat1 protein kinase is both necessary and sufficient to divert a vegetative cell from mitotic division to meiotic differentiation. The polypeptide is Meiosis inducing protein mei3 (Schizosaccharomyces pombe (strain 972 / ATCC 24843) (Fission yeast)).